We begin with the raw amino-acid sequence, 510 residues long: MNKKNHEDSNSFKKYSAIKENDSVDVVLIGSGIMSATLGIYLKLLEPNWIIHSYERLNKVGQESSNAWNNAGTGHSAFCELNYTSINKDGSINISKAIKVNESFEISKQLWAYLIKEKILVNSSSFINTVPHMSFVWGENNINFLKKRFFYLKQNALFKDMLYSENYDIIKKWAPLIMEGRSINEKVAATRMEIGTDVNFGEITKQIFYYLKNKSNFFLYLNHDVIDIIRNKDKTWCLKVVDNILKKTIKINSKYVFIGSGGGALKLLQKSKIEQSIGYAGFPVGGQFLVTKNKKLTNNHQAKVYGKSPIGAPPMSVPHIDTRIINGEKVLLFGPFATFSSKFLKNGSYFDLFSSLTKENIIPILQVGINNFNLVKYLINQLLKSKRGKFNDLCKYLPTAKMKDWSLITAGQRVQIIKKDIEKGGILEFGTEIINSKDCTLSALLGASPGASTSASTMLDLLKIMFYDKINKSEWKSKLNKIFISYNKKIHESYEYTLEIRNYTSKILSL.

The protein belongs to the MQO family. Requires FAD as cofactor.

It catalyses the reaction (S)-malate + a quinone = a quinol + oxaloacetate. It participates in carbohydrate metabolism; tricarboxylic acid cycle; oxaloacetate from (S)-malate (quinone route): step 1/1. This is Probable malate:quinone oxidoreductase from Wigglesworthia glossinidia brevipalpis.